A 291-amino-acid chain; its full sequence is Elongation factor Ts (291 aa).

Residues 84-87 (TDFV) are involved in Mg(2+) ion dislocation from EF-Tu.

This sequence belongs to the EF-Ts family.

Its subcellular location is the cytoplasm. In terms of biological role, associates with the EF-Tu.GDP complex and induces the exchange of GDP to GTP. It remains bound to the aminoacyl-tRNA.EF-Tu.GTP complex up to the GTP hydrolysis stage on the ribosome. This is Elongation factor Ts from Bifidobacterium adolescentis (strain ATCC 15703 / DSM 20083 / NCTC 11814 / E194a).